The following is a 230-amino-acid chain: Thioredoxin domain-containing protein PLP3B (230 aa).

The Thioredoxin domain maps to 89-173 (VSEGDFLGEV…GIAMDRLVGF (85 aa)). The tract at residues 199 to 230 (EKRKEEDEEDYEYQESIRRSVRSSANVDSDSD) is disordered. Polar residues predominate over residues 220 to 230 (RSSANVDSDSD).

It belongs to the phosducin family. Interacts with TUBB2, TUBB3, TUBB4 and TUBB5. As to expression, expressed in roots, cotyledons, leaves, stems and flowers.

It is found in the cytoplasm. Its subcellular location is the nucleus. Functionally, tubulin-binding protein involved in microtubule formation. The protein is Thioredoxin domain-containing protein PLP3B (PLP3B) of Arabidopsis thaliana (Mouse-ear cress).